Here is a 192-residue protein sequence, read N- to C-terminus: Putative metal-sulfur cluster biosynthesis proteins YuaD (192 aa).

One can recognise an MOSC domain in the interval 15–179 (ADTKSFVTKQ…VYTGDEIEVH (165 aa)).

In Bacillus subtilis (strain 168), this protein is Putative metal-sulfur cluster biosynthesis proteins YuaD (yuaD).